A 387-amino-acid polypeptide reads, in one-letter code: BTB and MATH domain-containing protein 38 (387 aa).

One can recognise an MATH domain in the interval 79–204 (EGMLKLEIPN…NEMVTVTARV (126 aa)). The region spanning 228–295 (CDMTLVINKQ…IYPCHKPITS (68 aa)) is the BTB domain.

This chain is BTB and MATH domain-containing protein 38 (bath-38), found in Caenorhabditis elegans.